The following is a 233-amino-acid chain: Superoxide dismutase [Mn], mitochondrial (233 aa).

The transit peptide at 1–26 (MFAKTAAANLTKKGGLSLLSTTARRT) directs the protein to the mitochondrion. Mn(2+) contacts are provided by histidine 52 and histidine 107. Phosphothreonine is present on residues threonine 147 and threonine 149. Residues aspartate 194 and histidine 198 each contribute to the Mn(2+) site.

The protein belongs to the iron/manganese superoxide dismutase family. In terms of assembly, homotetramer. Mn(2+) is required as a cofactor.

Its subcellular location is the mitochondrion matrix. The enzyme catalyses 2 superoxide + 2 H(+) = H2O2 + O2. Destroys superoxide anion radicals which are normally produced within the cells and which are toxic to biological systems. This is Superoxide dismutase [Mn], mitochondrial (SOD2) from Saccharomyces cerevisiae (strain ATCC 204508 / S288c) (Baker's yeast).